Consider the following 497-residue polypeptide: tRNA-2-methylthio-N(6)-dimethylallyladenosine synthase (497 aa).

Residues 1-50 (MTGTSNIPTHGKEHKDAPALLPLPAPNPHHTHAAHPGNPSHDRPPSRGKL) are disordered. The 118-residue stretch at 48–165 (GKLFIKTHGC…LPDMIRARRE (118 aa)) folds into the MTTase N-terminal domain. Cysteine 57, cysteine 94, cysteine 128, cysteine 202, cysteine 206, and cysteine 209 together coordinate [4Fe-4S] cluster. The region spanning 188–430 (RAEGPSAFVS…QKHINTYAAD (243 aa)) is the Radical SAM core domain. The 64-residue stretch at 433–496 (KRMIGTVQTV…SNSLRGRVHT (64 aa)) folds into the TRAM domain.

Belongs to the methylthiotransferase family. MiaB subfamily. In terms of assembly, monomer. [4Fe-4S] cluster is required as a cofactor.

Its subcellular location is the cytoplasm. It catalyses the reaction N(6)-dimethylallyladenosine(37) in tRNA + (sulfur carrier)-SH + AH2 + 2 S-adenosyl-L-methionine = 2-methylsulfanyl-N(6)-dimethylallyladenosine(37) in tRNA + (sulfur carrier)-H + 5'-deoxyadenosine + L-methionine + A + S-adenosyl-L-homocysteine + 2 H(+). Functionally, catalyzes the methylthiolation of N6-(dimethylallyl)adenosine (i(6)A), leading to the formation of 2-methylthio-N6-(dimethylallyl)adenosine (ms(2)i(6)A) at position 37 in tRNAs that read codons beginning with uridine. This Xylella fastidiosa (strain 9a5c) protein is tRNA-2-methylthio-N(6)-dimethylallyladenosine synthase.